A 406-amino-acid polypeptide reads, in one-letter code: COP9 signalosome complex subunit 4 (406 aa).

Residue Ala2 is modified to N-acetylalanine. Lys25 carries the post-translational modification N6-acetyllysine. In terms of domain architecture, PCI spans 197–366; that stretch reads YRRKFIEAAQ…GIVHFETREA (170 aa).

Belongs to the CSN4 family. As to quaternary structure, component of the CSN complex, composed of COPS1/GPS1, COPS2, COPS3, COPS4, COPS5, COPS6, COPS7 (COPS7A or COPS7B), COPS8 and COPS9. In the complex, it probably interacts directly with COPS1, COPS2, COPS3, COPS5, COPS6, COPS7 (COPS7A or COPS7B) and COPS8. Interacts with TOR1A; the interaction is direct and associates TOR1A and SNAPIN with the CSN complex. Interacts with STON2; controls STON2 neddylation levels. Interacts with ERCC6.

Its subcellular location is the cytoplasm. It is found in the nucleus. It localises to the cytoplasmic vesicle. The protein resides in the secretory vesicle. The protein localises to the synaptic vesicle. In terms of biological role, component of the COP9 signalosome complex (CSN), a complex involved in various cellular and developmental processes. The CSN complex is an essential regulator of the ubiquitin (Ubl) conjugation pathway by mediating the deneddylation of the cullin subunits of SCF-type E3 ligase complexes, leading to decrease the Ubl ligase activity of SCF-type complexes such as SCF, CSA or DDB2. Also involved in the deneddylation of non-cullin subunits such as STON2. The complex is also involved in phosphorylation of p53/TP53, c-jun/JUN, IkappaBalpha/NFKBIA, ITPK1, IRF8/ICSBP and SNAPIN, possibly via its association with CK2 and PKD kinases. CSN-dependent phosphorylation of TP53 and JUN promotes and protects degradation by the Ubl system, respectively. The polypeptide is COP9 signalosome complex subunit 4 (COPS4) (Bos taurus (Bovine)).